The sequence spans 227 residues: MYLLIPAAGIGKRMGSNRNKLLLKVRSQPIIAWTLLAAEAANTISWIGIISQPTDWPDFRAILADLKLTKPVELIQGGSTRQESVYNGLQALPLAAEQVLIHDGARCLATPDLFNSCAQAIRHCPGLIAGVPVKDTIKVVDEQGIIQETPDRQKLWAAQTPQGFDVKLLKQCHAEGVRQGWEVTDDAALFEKCGIEVRIVEGEETNLKVTTPQDLAIAEFILTTRGV.

This sequence belongs to the IspD/TarI cytidylyltransferase family. IspD subfamily.

It carries out the reaction 2-C-methyl-D-erythritol 4-phosphate + CTP + H(+) = 4-CDP-2-C-methyl-D-erythritol + diphosphate. It participates in isoprenoid biosynthesis; isopentenyl diphosphate biosynthesis via DXP pathway; isopentenyl diphosphate from 1-deoxy-D-xylulose 5-phosphate: step 2/6. In terms of biological role, catalyzes the formation of 4-diphosphocytidyl-2-C-methyl-D-erythritol from CTP and 2-C-methyl-D-erythritol 4-phosphate (MEP). This Nostoc punctiforme (strain ATCC 29133 / PCC 73102) protein is 2-C-methyl-D-erythritol 4-phosphate cytidylyltransferase.